The primary structure comprises 858 residues: Bifunctional uridylyltransferase/uridylyl-removing enzyme (858 aa).

Residues 1 to 324 are uridylyltransferase; that stretch reads MSASVAEPPP…PATSGVTRVL (324 aa). A uridylyl-removing region spans residues 325–681; sequence SPGRFVEKQG…ARPSPVGDAL (357 aa). Positions 443–565 constitute an HD domain; sequence VDQHILMVLR…VGSERRLTAL (123 aa). 2 ACT domains span residues 682–761 and 790–858; these read QVLV…PEPS and ILSV…AIAV.

This sequence belongs to the GlnD family. The cofactor is Mg(2+).

It catalyses the reaction [protein-PII]-L-tyrosine + UTP = [protein-PII]-uridylyl-L-tyrosine + diphosphate. The enzyme catalyses [protein-PII]-uridylyl-L-tyrosine + H2O = [protein-PII]-L-tyrosine + UMP + H(+). Uridylyltransferase (UTase) activity is inhibited by glutamine, while glutamine activates uridylyl-removing (UR) activity. Modifies, by uridylylation and deuridylylation, the PII regulatory proteins (GlnB and homologs), in response to the nitrogen status of the cell that GlnD senses through the glutamine level. Under low glutamine levels, catalyzes the conversion of the PII proteins and UTP to PII-UMP and PPi, while under higher glutamine levels, GlnD hydrolyzes PII-UMP to PII and UMP (deuridylylation). Thus, controls uridylylation state and activity of the PII proteins, and plays an important role in the regulation of nitrogen assimilation and metabolism. In Burkholderia mallei (strain NCTC 10247), this protein is Bifunctional uridylyltransferase/uridylyl-removing enzyme.